The following is a 108-amino-acid chain: MSIENLKSFDPFADTGDDEASSSNYIHIRIQQRNGRKTLTTVQGIPEEYDLKRILKVLRKDFGCNGNMVKDDEMGEIIQLQGDQRAKVCEFLITQLAIPKKNIKIHGF.

The disordered stretch occupies residues 1-20 (MSIENLKSFDPFADTGDDEA).

The protein belongs to the SUI1 family.

In terms of biological role, additional factor that functions in concert with eIF-2 and the initiator tRNA in directing the ribosome to the proper start site of translation. This Eremothecium gossypii (strain ATCC 10895 / CBS 109.51 / FGSC 9923 / NRRL Y-1056) (Yeast) protein is Protein translation factor SUI1 (SUI1A).